The primary structure comprises 428 residues: Folylpolyglutamate synthase (428 aa).

49–52 (GKGS) lines the ATP pocket. Residue serine 73 coordinates Mg(2+). Residues phenylalanine 75 and arginine 82 each coordinate (6R)-5,10-methylenetetrahydrofolyl-(gamma-L-Glu)n. 2 residues coordinate Mg(2+): glutamate 143 and histidine 170. Lysine 185 bears the N6-carboxylysine mark. ATP contacts are provided by residues asparagine 264, arginine 300, and 313–316 (DGAH). (6R)-5,10-methylenetetrahydrofolyl-(gamma-L-Glu)n is bound at residue serine 417.

It belongs to the folylpolyglutamate synthase family. As to quaternary structure, monomer. Mg(2+) is required as a cofactor.

It carries out the reaction (6S)-5,6,7,8-tetrahydrofolyl-(gamma-L-Glu)(n) + L-glutamate + ATP = (6S)-5,6,7,8-tetrahydrofolyl-(gamma-L-Glu)(n+1) + ADP + phosphate + H(+). The enzyme catalyses (6R)-5,10-methylenetetrahydrofolyl-(gamma-L-Glu)(n) + L-glutamate + ATP = (6R)-5,10-methylenetetrahydrofolyl-(gamma-L-Glu)(n+1) + ADP + phosphate + H(+). The catalysed reaction is 10-formyltetrahydrofolyl-(gamma-L-Glu)(n) + L-glutamate + ATP = 10-formyltetrahydrofolyl-(gamma-L-Glu)(n+1) + ADP + phosphate + H(+). With respect to regulation, competitively inhibited by adenosine 5'-(3-thio)triphosphate and beta,gamma-methylene-ATP. Involved in the conversion of folates to polyglutamate derivatives, and likely functions in the retention of cellular folate pools. Catalyzes successive MgATP-dependent additions of glutamate to a pteroylmonoglutamate substrate, with a high preference for 5,10-methylenetetrahydrofolate (mTHF). Thus, metabolizes mTHF to the tetraglutamate derivative, but longer glutamate chain length products are not observed. Tetrahydrofolate (H4PteGlu) and 10-formyl-H4PteGlu are poorer folate substrates. In contrast to E.coli FolC, this enzyme does not display dihydrofolate synthase activity. The protein is Folylpolyglutamate synthase of Lacticaseibacillus casei (Lactobacillus casei).